Consider the following 156-residue polypeptide: Small ribosomal subunit protein uS7 (156 aa).

It belongs to the universal ribosomal protein uS7 family. As to quaternary structure, part of the 30S ribosomal subunit. Contacts proteins S9 and S11.

One of the primary rRNA binding proteins, it binds directly to 16S rRNA where it nucleates assembly of the head domain of the 30S subunit. Is located at the subunit interface close to the decoding center, probably blocks exit of the E-site tRNA. This Tolumonas auensis (strain DSM 9187 / NBRC 110442 / TA 4) protein is Small ribosomal subunit protein uS7.